We begin with the raw amino-acid sequence, 366 residues long: Galactoside alpha-(1,2)-fucosyltransferase 1 (366 aa).

Over 1–8 the chain is Cytoplasmic; sequence MWPLSHRH. Residues 9 to 25 traverse the membrane as a helical; Signal-anchor for type II membrane protein segment; it reads LCLAFLLVCVLSAISFF. Over 26–366 the chain is Lumenal; it reads LHIHQDSIRH…LSPLWTLAEP (341 aa). Residues Asn-66, Asn-302, and Asn-328 are each glycosylated (N-linked (GlcNAc...) asparagine).

This sequence belongs to the glycosyltransferase 11 family.

The protein localises to the golgi apparatus. It is found in the golgi stack membrane. The enzyme catalyses a beta-D-galactosyl-(1-&gt;4)-N-acetyl-beta-D-glucosaminyl derivative + GDP-beta-L-fucose = an alpha-L-Fuc-(1-&gt;2)-beta-D-Gal-(1-&gt;4)-beta-D-GlcNAc derivative + GDP + H(+). The catalysed reaction is a ganglioside GA1 + GDP-beta-L-fucose = a ganglioside Fuc-GA1 + GDP + H(+). It carries out the reaction a beta-D-Gal-(1-&gt;3)-beta-D-GlcNAc-(1-&gt;3)-beta-D-Gal-(1-&gt;4)-beta-D-Glc-(1&lt;-&gt;1')-Cer(d18:1(4E)) + GDP-beta-L-fucose = alpha-L-fucosyl-(1-&gt;2)- beta-D-galactosyl-(1-&gt;3)-N-acetyl-beta-D-glucosaminyl-(1-&gt;3)-beta-D-galactosyl-(1-&gt;4)-beta-D-glucosyl-(1&lt;-&gt;1')-N-acylsphing-4-enine + GDP + H(+). It catalyses the reaction a neolactoside nLc4Cer(d18:1(4E)) + GDP-beta-L-fucose = a neolactoside IV(2)-alpha-Fuc-nLc4Cer(d18:1(4E)) + GDP + H(+). The enzyme catalyses a ganglioside GM1 + GDP-beta-L-fucose = a ganglioside Fuc-GM1 + GDP + H(+). The catalysed reaction is beta-D-galactosyl-(1-&gt;3)-N-acetyl-D-galactosamine + GDP-beta-L-fucose = alpha-L-fucosyl-(1-&gt;2)-beta-D-galactosyl-(1-&gt;3)-N-acetyl-D-galactosamine + GDP + H(+). The protein operates within protein modification; protein glycosylation. Its function is as follows. Catalyzes the transfer of L-fucose, from a guanosine diphosphate-beta-L-fucose, to the terminal galactose residue of glycoconjugates through an alpha(1,2) linkage leading to H antigen synthesis that is an intermediate substrate in the synthesis of ABO blood group antigens. H antigen is essential for maturation of the glomerular layer of the main olfactory bulb, in cell migration and early cell-cell contacts during tumor associated angiogenesis. Preferentially fucosylates soluble lactose and to a lesser extent fucosylates glycolipids gangliosides GA1 and GM1a. This is Galactoside alpha-(1,2)-fucosyltransferase 1 from Aotus azarae (Azara's night monkey).